We begin with the raw amino-acid sequence, 70 residues long: Small ribosomal subunit protein bS21A (70 aa).

It belongs to the bacterial ribosomal protein bS21 family.

The polypeptide is Small ribosomal subunit protein bS21A (rpsU1) (Burkholderia mallei (strain ATCC 23344)).